The sequence spans 408 residues: Arginine biosynthesis bifunctional protein ArgJ (408 aa).

Substrate-binding residues include T158, K184, T195, E281, N403, and T408. T195 serves as the catalytic Nucleophile.

The protein belongs to the ArgJ family. In terms of assembly, heterotetramer of two alpha and two beta chains.

The protein resides in the cytoplasm. The enzyme catalyses N(2)-acetyl-L-ornithine + L-glutamate = N-acetyl-L-glutamate + L-ornithine. It catalyses the reaction L-glutamate + acetyl-CoA = N-acetyl-L-glutamate + CoA + H(+). Its pathway is amino-acid biosynthesis; L-arginine biosynthesis; L-ornithine and N-acetyl-L-glutamate from L-glutamate and N(2)-acetyl-L-ornithine (cyclic): step 1/1. The protein operates within amino-acid biosynthesis; L-arginine biosynthesis; N(2)-acetyl-L-ornithine from L-glutamate: step 1/4. In terms of biological role, catalyzes two activities which are involved in the cyclic version of arginine biosynthesis: the synthesis of N-acetylglutamate from glutamate and acetyl-CoA as the acetyl donor, and of ornithine by transacetylation between N(2)-acetylornithine and glutamate. The chain is Arginine biosynthesis bifunctional protein ArgJ from Shouchella clausii (strain KSM-K16) (Alkalihalobacillus clausii).